A 146-amino-acid polypeptide reads, in one-letter code: VHLSAEEKAAVTGLWGKVNVEEVGGEALGRLLVVYPWTQRFFESFGDLSSAAAVMGNPKVKAHGKKVLTSFSEGLSHLDNLKGTFAKLSELHCDKLHVDPENFRLLGNMIVITLAHHYGPEFGPQTQAAFQKVVAGVANALAHKYH.

Residue valine 1 is modified to N-acetylvaline. The 145-residue stretch at 2-146 (HLSAEEKAAV…VANALAHKYH (145 aa)) folds into the Globin domain. Residue threonine 12 is modified to Phosphothreonine. At serine 44 the chain carries Phosphoserine. Lysine 59 is modified (N6-acetyllysine). Residue histidine 63 participates in heme b binding. N6-acetyllysine is present on lysine 82. Heme b is bound at residue histidine 92. Cysteine 93 bears the S-nitrosocysteine mark. N6-acetyllysine is present on lysine 144.

Belongs to the globin family. Heterotetramer of two alpha chains and two beta chains. As to expression, red blood cells.

Involved in oxygen transport from the lung to the various peripheral tissues. The sequence is that of Hemoglobin subunit beta (HBB) from Ctenodactylus gundi (Northern gundi).